Consider the following 83-residue polypeptide: uncharacterized protein (83 aa).

The disordered stretch occupies residues 57–83; sequence ESVEEEEEFEDYDEFEEEEEYYYDDEY.

This is an uncharacterized protein from Archaeoglobus fulgidus (strain ATCC 49558 / DSM 4304 / JCM 9628 / NBRC 100126 / VC-16).